We begin with the raw amino-acid sequence, 198 residues long: Uracil phosphoribosyltransferase homolog (198 aa).

Belongs to the UPRTase family.

The protein resides in the plastid. It localises to the chloroplast. This Porphyra purpurea (Red seaweed) protein is Uracil phosphoribosyltransferase homolog.